The sequence spans 187 residues: ATP synthase subunit b (187 aa).

A helical membrane pass occupies residues 31–51 (VAIMGLAIFVLFLILSYLLFN).

Belongs to the ATPase B chain family. F-type ATPases have 2 components, F(1) - the catalytic core - and F(0) - the membrane proton channel. F(1) has five subunits: alpha(3), beta(3), gamma(1), delta(1), epsilon(1). F(0) has three main subunits: a(1), b(2) and c(10-14). The alpha and beta chains form an alternating ring which encloses part of the gamma chain. F(1) is attached to F(0) by a central stalk formed by the gamma and epsilon chains, while a peripheral stalk is formed by the delta and b chains.

It localises to the cell membrane. In terms of biological role, f(1)F(0) ATP synthase produces ATP from ADP in the presence of a proton or sodium gradient. F-type ATPases consist of two structural domains, F(1) containing the extramembraneous catalytic core and F(0) containing the membrane proton channel, linked together by a central stalk and a peripheral stalk. During catalysis, ATP synthesis in the catalytic domain of F(1) is coupled via a rotary mechanism of the central stalk subunits to proton translocation. Its function is as follows. Component of the F(0) channel, it forms part of the peripheral stalk, linking F(1) to F(0). This Lachnoclostridium phytofermentans (strain ATCC 700394 / DSM 18823 / ISDg) (Clostridium phytofermentans) protein is ATP synthase subunit b.